Here is a 270-residue protein sequence, read N- to C-terminus: Glutamate racemase (270 aa).

Substrate-binding positions include aspartate 14 to serine 15 and tyrosine 46 to glycine 47. The active-site Proton donor/acceptor is cysteine 77. Asparagine 78 to threonine 79 is a binding site for substrate. The active-site Proton donor/acceptor is the cysteine 189. Threonine 190 to histidine 191 is a substrate binding site.

It belongs to the aspartate/glutamate racemases family.

It carries out the reaction L-glutamate = D-glutamate. It functions in the pathway cell wall biogenesis; peptidoglycan biosynthesis. Provides the (R)-glutamate required for cell wall biosynthesis. This chain is Glutamate racemase, found in Neisseria gonorrhoeae (strain ATCC 700825 / FA 1090).